The sequence spans 361 residues: Peptide chain release factor 1 (361 aa).

At glutamine 233 the chain carries N5-methylglutamine. The segment covering 280–293 (ERRKKEQERADSRR) has biased composition (basic and acidic residues). Positions 280–307 (ERRKKEQERADSRRGQVGSGDRSERIRT) are disordered.

The protein belongs to the prokaryotic/mitochondrial release factor family. Methylated by PrmC. Methylation increases the termination efficiency of RF1.

The protein resides in the cytoplasm. Its function is as follows. Peptide chain release factor 1 directs the termination of translation in response to the peptide chain termination codons UAG and UAA. This Rickettsia massiliae (strain Mtu5) protein is Peptide chain release factor 1.